The sequence spans 244 residues: Ureidoacrylate amidohydrolase RutB (244 aa).

The active-site Proton acceptor is the Asp-38. Lys-147 is an active-site residue. The active-site Nucleophile is the Cys-180.

This sequence belongs to the isochorismatase family. RutB subfamily.

It carries out the reaction (Z)-3-ureidoacrylate + H2O + H(+) = (Z)-3-aminoacrylate + NH4(+) + CO2. The catalysed reaction is (Z)-3-ureidoacrylate + H2O = (Z)-3-aminoacrylate + carbamate + H(+). The enzyme catalyses (Z)-2-methylureidoacrylate + H2O + H(+) = (Z)-2-methylaminoacrylate + NH4(+) + CO2. Hydrolyzes ureidoacrylate to form aminoacrylate and carbamate. The carbamate hydrolyzes spontaneously, thereby releasing one of the nitrogen atoms of the pyrimidine ring as ammonia and one of its carbon atoms as CO2. This Shigella flexneri serotype X (strain 2002017) protein is Ureidoacrylate amidohydrolase RutB.